A 455-amino-acid chain; its full sequence is Epoxide hydrolase 1 (455 aa).

Residues 1-21 (MWLELILASVLGFVIYWFVSR) traverse the membrane as a helical; Signal-anchor for type III membrane protein segment. At 22–455 (DKEETLPLED…RKFVSLAELQ (434 aa)) the chain is on the cytoplasmic side. The active-site Nucleophile is Asp226. Arg295 is subject to Dimethylated arginine. Tyr374 serves as the catalytic Proton donor. Residue His431 is the Proton acceptor of the active site. Lys439 carries the post-translational modification N6-acetyllysine.

This sequence belongs to the peptidase S33 family.

It is found in the microsome membrane. It localises to the endoplasmic reticulum membrane. The enzyme catalyses cis-stilbene oxide + H2O = (1R,2R)-hydrobenzoin. The catalysed reaction is 1-(4-methoxyphenyl)-N-methyl-N-[(3-methyloxetan-3-yl)methyl]methanamine + H2O = 2-{[(4-methoxybenzyl)(methyl)amino]methyl}-2-methylpropane-1,3-diol. It carries out the reaction 8,9-epoxy-(5Z,11Z,14Z)-eicosatrienoate + H2O = 8,9-dihydroxy-(5Z,11Z,14Z)-eicosatrienoate. It catalyses the reaction 11,12-epoxy-(5Z,8Z,14Z)-eicosatrienoate + H2O = 11,12-dihydroxy-(5Z,8Z,14Z)-eicosatrienoate. The enzyme catalyses 2-(5Z,8Z,11Z,14Z-eicosatetraenoyl)-glycerol + H2O = glycerol + (5Z,8Z,11Z,14Z)-eicosatetraenoate + H(+). With respect to regulation, inhibited by 10-hydroxystearamide and methoxy-arachidonyl fluorophosphate. Functionally, biotransformation enzyme that catalyzes the hydrolysis of arene and aliphatic epoxides to less reactive and more water soluble dihydrodiols by the trans addition of water. May play a role in the metabolism of endogenous lipids such as epoxide-containing fatty acids. Metabolizes the abundant endocannabinoid 2-arachidonoylglycerol (2-AG) to free arachidonic acid (AA) and glycerol. Binds 20(S)-hydroxycholesterol (20(S)-OHC). This chain is Epoxide hydrolase 1, found in Mus musculus (Mouse).